A 444-amino-acid chain; its full sequence is DNA primase DnaG (444 aa).

Residues 186-260 (DSIIVVEGRN…EVDFVARAPP (75 aa)) form the Toprim domain. 3 residues coordinate Mg(2+): Glu-192, Asp-234, and Asp-236.

This sequence belongs to the archaeal DnaG primase family. In terms of assembly, forms a ternary complex with MCM helicase and DNA. Component of the archaeal exosome complex. Mg(2+) is required as a cofactor.

It catalyses the reaction ssDNA + n NTP = ssDNA/pppN(pN)n-1 hybrid + (n-1) diphosphate.. In terms of biological role, RNA polymerase that catalyzes the synthesis of short RNA molecules used as primers for DNA polymerase during DNA replication. Also part of the exosome, which is a complex involved in RNA degradation. Acts as a poly(A)-binding protein that enhances the interaction between heteromeric, adenine-rich transcripts and the exosome. The sequence is that of DNA primase DnaG from Thermoplasma volcanium (strain ATCC 51530 / DSM 4299 / JCM 9571 / NBRC 15438 / GSS1).